Consider the following 398-residue polypeptide: Serine/threonine-protein phosphatase 2A activator (398 aa).

3 residues coordinate ATP: Arg137, Thr142, and Gly143. Positions 197 and 203 each coordinate Mg(2+). The ATP site is built by Pro293, Gln296, and His297. Over residues 343–352 the composition is skewed to pro residues; sequence PVATAPPPPA. The disordered stretch occupies residues 343-398; sequence PVATAPPPPAESLSIEQNVGDSSSESSDNSVVLRPSTSSSSLVAAAEGSGDKPSKE. Low complexity predominate over residues 363-388; it reads DSSSESSDNSVVLRPSTSSSSLVAAA.

It belongs to the PTPA-type PPIase family. Associates with PP2A heterodimeric core enzyme PP2A(D), composed of a catalytic subunit (subunit C) and a constant regulatory subunit (PR65 or subunit A). Interacts with the catalytic subunit Pp4-19C of the serine/threonine-protein phosphatase 4 (PP4) complex; thereby mediating basal localization of the Miranda (Mira) complex; probably by facilitating the dephosphorylation of Mira.

It localises to the cytoplasm. Its subcellular location is the nucleus. The catalysed reaction is [protein]-peptidylproline (omega=180) = [protein]-peptidylproline (omega=0). In terms of biological role, PPIases accelerate the folding of proteins. It catalyzes the cis-trans isomerization of proline imidic peptide bonds in oligopeptides. Acts as a regulatory subunit for serine/threonine-protein phosphatase 2A (PP2A). Modulates PP2A activity or substrate specificity, probably by inducing a conformational change in the catalytic subunit, a proposed direct target of the PPIase. Acts as mediator for the basal localization of the Miranda (Mira) complex during mitosis of larval neuroblast asymmetric division. Associates with the phosphatase 4 (PP4) complex to mediate basal localization of Mira; probably by facilitating the dephosphorylation of Mira. Cortical association of Mira mediated by the PTPA-PP4 complex seems to be independent of aPKC activity. This chain is Serine/threonine-protein phosphatase 2A activator, found in Drosophila melanogaster (Fruit fly).